A 454-amino-acid chain; its full sequence is Pup--protein ligase (454 aa).

A Mg(2+)-binding site is contributed by glutamate 9. Arginine 53 is an ATP binding site. Tyrosine 55 serves as a coordination point for Mg(2+). The Proton acceptor role is filled by aspartate 57. Glutamate 63 contributes to the Mg(2+) binding site. The ATP site is built by threonine 66 and tryptophan 420.

This sequence belongs to the Pup ligase/Pup deamidase family. Pup-conjugating enzyme subfamily.

The enzyme catalyses ATP + [prokaryotic ubiquitin-like protein]-L-glutamate + [protein]-L-lysine = ADP + phosphate + N(6)-([prokaryotic ubiquitin-like protein]-gamma-L-glutamyl)-[protein]-L-lysine.. It participates in protein degradation; proteasomal Pup-dependent pathway. It functions in the pathway protein modification; protein pupylation. Functionally, catalyzes the covalent attachment of the prokaryotic ubiquitin-like protein modifier Pup to the proteasomal substrate proteins, thereby targeting them for proteasomal degradation. This tagging system is termed pupylation. The ligation reaction involves the side-chain carboxylate of the C-terminal glutamate of Pup and the side-chain amino group of a substrate lysine. This Pseudarthrobacter chlorophenolicus (strain ATCC 700700 / DSM 12829 / CIP 107037 / JCM 12360 / KCTC 9906 / NCIMB 13794 / A6) (Arthrobacter chlorophenolicus) protein is Pup--protein ligase.